The following is a 340-amino-acid chain: Adenosine kinase (340 aa).

Asp293 is an active-site residue.

It belongs to the carbohydrate kinase PfkB family. It depends on Mg(2+) as a cofactor.

It catalyses the reaction adenosine + ATP = AMP + ADP + H(+). Its pathway is purine metabolism; AMP biosynthesis via salvage pathway; AMP from adenosine: step 1/1. Functionally, ATP dependent phosphorylation of adenosine and other related nucleoside analogs to monophosphate derivatives. ADO1 does not play a major role in adenine utilization in yeast. Its physiological role could primarily be to recycle adenosine produced by the methyl cycle. The sequence is that of Adenosine kinase from Saccharomyces cerevisiae (strain ATCC 204508 / S288c) (Baker's yeast).